A 208-amino-acid polypeptide reads, in one-letter code: LexA repressor (208 aa).

A DNA-binding region (H-T-H motif) is located at residues 28–48 (RAEIARQLGFRSANAAEEHLK). Active-site for autocatalytic cleavage activity residues include S125 and K162.

The protein belongs to the peptidase S24 family. Homodimer.

It catalyses the reaction Hydrolysis of Ala-|-Gly bond in repressor LexA.. In terms of biological role, represses a number of genes involved in the response to DNA damage (SOS response), including recA and lexA. In the presence of single-stranded DNA, RecA interacts with LexA causing an autocatalytic cleavage which disrupts the DNA-binding part of LexA, leading to derepression of the SOS regulon and eventually DNA repair. The sequence is that of LexA repressor from Alteromonas mediterranea (strain DSM 17117 / CIP 110805 / LMG 28347 / Deep ecotype).